Here is a 423-residue protein sequence, read N- to C-terminus: Glucose-1-phosphate adenylyltransferase (423 aa).

Residues tyrosine 98, glycine 163, 178–179 (EK), and serine 189 contribute to the alpha-D-glucose 1-phosphate site.

The protein belongs to the bacterial/plant glucose-1-phosphate adenylyltransferase family. In terms of assembly, homotetramer.

The catalysed reaction is alpha-D-glucose 1-phosphate + ATP + H(+) = ADP-alpha-D-glucose + diphosphate. Its pathway is glycan biosynthesis; glycogen biosynthesis. In terms of biological role, involved in the biosynthesis of ADP-glucose, a building block required for the elongation reactions to produce glycogen. Catalyzes the reaction between ATP and alpha-D-glucose 1-phosphate (G1P) to produce pyrophosphate and ADP-Glc. The chain is Glucose-1-phosphate adenylyltransferase from Thermotoga maritima (strain ATCC 43589 / DSM 3109 / JCM 10099 / NBRC 100826 / MSB8).